Consider the following 125-residue polypeptide: Protein ApaG (125 aa).

One can recognise an ApaG domain in the interval 1–125; it reads MINSPRVCVQ…FRLAIPSLIN (125 aa).

The polypeptide is Protein ApaG (Sodalis glossinidius (strain morsitans)).